We begin with the raw amino-acid sequence, 132 residues long: Nuclear transition protein 2 (132 aa).

Over residues Met-1 to Arg-20 the composition is skewed to polar residues. The tract at residues Met-1–Asn-132 is disordered. Zn(2+)-binding residues include His-12, His-16, His-24, Cys-29, Cys-31, and Cys-35. Basic residues predominate over residues Ser-37–Pro-59. Residues Ser-82–Cys-94 are compositionally biased toward polar residues. The short motif at Gly-105–Val-113 is the Nuclear localization signal element. Positions Ile-108 to Asn-132 are enriched in basic residues. The residue at position 127 (Ser-127) is a Phosphoserine.

Belongs to the nuclear transition protein 2 family. Testis.

It is found in the nucleus. The protein resides in the nucleolus. Its subcellular location is the chromosome. In terms of biological role, plays a key role in the replacement of histones to protamine in the elongating spermatids of mammals. In condensing spermatids, loaded onto the nucleosomes, where it promotes the recruitment and processing of protamines, which are responsible for histone eviction. This chain is Nuclear transition protein 2 (TNP2), found in Bos taurus (Bovine).